A 702-amino-acid polypeptide reads, in one-letter code: BRCA1-associated RING domain protein 1 (702 aa).

The segment at 18–67 adopts an RING-type zinc-finger fold; sequence CVKCKKPRGDLQYLGSSCKHAYCWECIATFQQKPSGKRSSVARHMCPSCA. 2 disordered regions span residues 153-205 and 281-346; these read DENR…TSVK and ASMS…YGTR. Over residues 174-188 the composition is skewed to polar residues; it reads ASPTRNSTKRPSTVS. A compositionally biased stretch (basic and acidic residues) spans 312–321; that stretch reads IKSDKIERRS. ANK repeat units follow at residues 347-376, 379-408, and 413-442; these read RGEAVLVNSIRNNRIPQLRSAVEAGTCVNE, DGKTPLYVAVENSSLEAVKILVEAGAVINA, and TLETTLHEAVRRQNTQIVEYLLSKGASIKI. One can recognise a BRCT domain in the interval 601–702; it reads MQPKLFAGCK…LGCSITTPPH (102 aa).

Heterodimer (via RING-type zinc finger) with brc-1 to form the core CeBCD complex. Brc-1-brd-1 heterodimer-containing CeBCD complexes bound to chromatin are activated as an E3-ubiquitin ligase in response to DNA damage. The heterodimer interacts with the recombinase rad-51 following ionizing irradiation; the interaction is direct. The heterodimer interacts the E2-ubiquitin-conjugating enzyme let-70 following ionizing irradiation. The heterodimer interacts with the pro-crossover proteins msh-5 and syp-3. Interacts with smt-3, tac-1 and ubc-9. Autoubiquitinated. In terms of processing, phosphorylation of CeBCD complexes is required for E3 ubiquitin-protein ligase activity.

It is found in the cytoplasm. It localises to the nucleus. The protein localises to the chromosome. It catalyses the reaction S-ubiquitinyl-[E2 ubiquitin-conjugating enzyme]-L-cysteine + [acceptor protein]-L-lysine = [E2 ubiquitin-conjugating enzyme]-L-cysteine + N(6)-ubiquitinyl-[acceptor protein]-L-lysine.. It functions in the pathway protein modification; protein ubiquitination. Its activity is regulated as follows. E3 ubiquitin-protein ligase activity of CeBCD complexes occurs at DNA damage sites. Following DNA damage, E3 ubiquitin-protein ligase activity is reduced by caffeine treatment (inhibitor of ATM and ATK kinase activity). Constituent of the CeBCD complex that possesses E3 ubiquitin-protein ligase activity. When bound to chromatin, the brc-1-brd-1 heterodimer within the CeBCD complex is inactive during normal conditions, but in response to DNA damage, the brc-1-brd-1 heterodimer associates with other proteins such as the recombinase rad-51 or the E2-ubiquitin-conjugating enzyme let-70, which activate the CeBCD complex as an E3-ubiquitin ligase. Moreover, association between the brc-1-brd-1 heterodimer and rad-51 and let-70, probably requires DNA checkpoint proteins such as atl-1 and mre-11 in order to induce ubiquitination at DNA damage sites. To this end, the brc-1-brd-1 heterodimer coordinates a diverse range of cellular pathways such as DNA damage repair, ubiquitination and transcriptional regulation to maintain genomic stability. Plays a role in triggering cellular responses at damage sites in response to DNA damage that may be induced by ionizing radiation for example. In particular, protects against chromosome non-disjunction and nuclear fragmentation during meiotic double-strand break repair to ensure sister chromatid recombination and aid chromosome stability. In Caenorhabditis elegans, this protein is BRCA1-associated RING domain protein 1.